The sequence spans 62 residues: Photosystem II reaction center protein Z (62 aa).

2 helical membrane-spanning segments follow: residues 8–28 (LVVA…ITLS) and 41–61 (VTAS…NSFV).

Belongs to the PsbZ family. As to quaternary structure, PSII is composed of 1 copy each of membrane proteins PsbA, PsbB, PsbC, PsbD, PsbE, PsbF, PsbH, PsbI, PsbJ, PsbK, PsbL, PsbM, PsbT, PsbX, PsbY, PsbZ, Psb30/Ycf12, at least 3 peripheral proteins of the oxygen-evolving complex and a large number of cofactors. It forms dimeric complexes.

Its subcellular location is the plastid. The protein resides in the chloroplast thylakoid membrane. In terms of biological role, may control the interaction of photosystem II (PSII) cores with the light-harvesting antenna, regulates electron flow through the 2 photosystem reaction centers. PSII is a light-driven water plastoquinone oxidoreductase, using light energy to abstract electrons from H(2)O, generating a proton gradient subsequently used for ATP formation. The protein is Photosystem II reaction center protein Z of Cyanidioschyzon merolae (strain NIES-3377 / 10D) (Unicellular red alga).